We begin with the raw amino-acid sequence, 134 residues long: MSWQTYVDDHLMCEVDGNPGQQLSAAAIIGHDGSVWAQSSTFPKFKPEEITGIMKNFDEPGHLAPTGLYLGGTKYMVIQGEPIAVIRGKKGSGGVTIKKTGQALVFGVYDEPVTPGQCNLIVERLGDYLIEQGL.

Belongs to the profilin family. Occurs in many kinds of cells as a complex with monomeric actin in a 1:1 ratio.

It localises to the cytoplasm. The protein resides in the cytoskeleton. Binds to actin and affects the structure of the cytoskeleton. At high concentrations, profilin prevents the polymerization of actin, whereas it enhances it at low concentrations. By binding to PIP2, it inhibits the formation of IP3 and DG. The polypeptide is Profilin (Daucus carota (Wild carrot)).